The following is a 202-amino-acid chain: Ras-related protein ORAB-1 (202 aa).

Residues 15–23 (GDSGVGKSC), 33–40 (YTESYIST), 63–67 (DTAGQ), 121–124 (NKCD), and 151–153 (SAK) contribute to the GTP site. Residues 37–45 (YISTIGVDF) carry the Effector region motif. Positions 173 to 202 (MGPGATSGGSEKSNVNIQSTPVKSSGGGCC) are disordered. Residues 180–195 (GGSEKSNVNIQSTPVK) show a composition bias toward polar residues. S-geranylgeranyl cysteine attachment occurs at residues cysteine 201 and cysteine 202.

Belongs to the small GTPase superfamily. Rab family.

It localises to the cell membrane. Its function is as follows. Protein transport. Probably involved in vesicular traffic. The sequence is that of Ras-related protein ORAB-1 from Diplobatis ommata (Ocellated electric ray).